A 589-amino-acid chain; its full sequence is Arylsulfatase L (589 aa).

A signal peptide spans 1–31; that stretch reads MLHLHHSCLCFRSWLPAMLAVLLSLAPSASS. Residues aspartate 46 and aspartate 47 each coordinate Ca(2+). A glycan (N-linked (GlcNAc...) asparagine) is linked at asparagine 58. Cysteine 86 contacts Ca(2+). Catalysis depends on cysteine 86, which acts as the Nucleophile. At cysteine 86 the chain carries 3-oxoalanine (Cys). A glycan (N-linked (GlcNAc...) asparagine) is linked at asparagine 125. Residue lysine 145 participates in substrate binding. Histidine 147 is a catalytic residue. The N-linked (GlcNAc...) asparagine glycan is linked to asparagine 258. Histidine 301 provides a ligand contact to substrate. A glycan (N-linked (GlcNAc...) asparagine) is linked at asparagine 344. Residues aspartate 353 and histidine 354 each coordinate Ca(2+). Lysine 378 contacts substrate.

This sequence belongs to the sulfatase family. The cofactor is Ca(2+). Post-translationally, N-glycosylated. The conversion to 3-oxoalanine (also known as C-formylglycine, FGly), of a serine or cysteine residue in prokaryotes and of a cysteine residue in eukaryotes, is critical for catalytic activity. As to expression, expressed in the pancreas, liver and kidney.

The protein localises to the golgi apparatus. It is found in the golgi stack. The enzyme catalyses an aryl sulfate + H2O = a phenol + sulfate + H(+). Its activity is regulated as follows. Inhibited by millimolar concentrations of warfarin. Exhibits arylsulfatase activity towards the artificial substrate 4-methylumbelliferyl sulfate. May be essential for the correct composition of cartilage and bone matrix during development. Has no activity toward steroid sulfates. The sequence is that of Arylsulfatase L from Homo sapiens (Human).